A 230-amino-acid polypeptide reads, in one-letter code: Zein-alpha 19A2 (230 aa).

An N-terminal signal peptide occupies residues 1–18 (KIFCFLMLLGLSASAATA).

The protein belongs to the zein family.

Functionally, zeins are major seed storage proteins. This Zea mays (Maize) protein is Zein-alpha 19A2.